The primary structure comprises 166 residues: Large ribosomal subunit protein uL10 (166 aa).

This sequence belongs to the universal ribosomal protein uL10 family. In terms of assembly, part of the ribosomal stalk of the 50S ribosomal subunit. The N-terminus interacts with L11 and the large rRNA to form the base of the stalk. The C-terminus forms an elongated spine to which L12 dimers bind in a sequential fashion forming a multimeric L10(L12)X complex.

Functionally, forms part of the ribosomal stalk, playing a central role in the interaction of the ribosome with GTP-bound translation factors. The polypeptide is Large ribosomal subunit protein uL10 (Ectopseudomonas mendocina (strain ymp) (Pseudomonas mendocina)).